Here is a 169-residue protein sequence, read N- to C-terminus: Photosystem I assembly protein Ycf3 (169 aa).

3 TPR repeats span residues 35–68 (AFTY…EIDP), 72–105 (SYIL…NPSL), and 120–153 (GEQA…APNN).

The protein belongs to the Ycf3 family.

It localises to the plastid. It is found in the chloroplast thylakoid membrane. In terms of biological role, essential for the assembly of the photosystem I (PSI) complex. May act as a chaperone-like factor to guide the assembly of the PSI subunits. The protein is Photosystem I assembly protein Ycf3 of Staurastrum punctulatum (Green alga).